We begin with the raw amino-acid sequence, 260 residues long: 3'-5' ssDNA/RNA exonuclease TatD (260 aa).

A divalent metal cation is bound by residues glutamate 91, histidine 127, and histidine 152.

It belongs to the metallo-dependent hydrolases superfamily. TatD-type hydrolase family. TatD subfamily. Monomer. Mg(2+) is required as a cofactor.

The protein resides in the cytoplasm. In terms of biological role, 3'-5' exonuclease that prefers single-stranded DNA and RNA. May play a role in the H(2)O(2)-induced DNA damage repair. This Salmonella typhimurium (strain LT2 / SGSC1412 / ATCC 700720) protein is 3'-5' ssDNA/RNA exonuclease TatD.